We begin with the raw amino-acid sequence, 84 residues long: Sulfur carrier protein TusA (84 aa).

The active-site Cysteine persulfide intermediate is cysteine 21.

It belongs to the sulfur carrier protein TusA family.

It is found in the cytoplasm. Sulfur carrier protein which probably makes part of a sulfur-relay system. This Pseudomonas savastanoi pv. phaseolicola (strain 1448A / Race 6) (Pseudomonas syringae pv. phaseolicola (strain 1448A / Race 6)) protein is Sulfur carrier protein TusA.